The primary structure comprises 420 residues: Histidine--tRNA ligase (420 aa).

This sequence belongs to the class-II aminoacyl-tRNA synthetase family. Homodimer.

The protein resides in the cytoplasm. The enzyme catalyses tRNA(His) + L-histidine + ATP = L-histidyl-tRNA(His) + AMP + diphosphate + H(+). The protein is Histidine--tRNA ligase of Thermotoga petrophila (strain ATCC BAA-488 / DSM 13995 / JCM 10881 / RKU-1).